The primary structure comprises 385 residues: Putative RNA methyltransferase YpsC (385 aa).

Residues 44–156 form the THUMP domain; it reads AICRANLWLR…KDQALITLDS (113 aa).

The protein belongs to the methyltransferase superfamily. In terms of assembly, interacts with the RNA polymerase core.

This chain is Putative RNA methyltransferase YpsC (ypsC), found in Bacillus subtilis (strain 168).